Consider the following 284-residue polypeptide: Protein G1-like9 (284 aa).

Residues 1-69 (MEPSPDAPRA…PAAAGLSRYE (69 aa)) form a disordered region. Low complexity-rich tracts occupy residues 13-32 (AEEQ…AASS) and 40-63 (QSQA…PAAA). Positions 67 to 194 (RYESQKRRDW…ARGIPYEKKR (128 aa)) constitute an ALOG domain. Positions 192–196 (KKRKR) match the Nuclear localization signal motif. The tract at residues 209-284 (VAPPPVVTAP…SAAKGSATSS (76 aa)) is disordered. The segment covering 246–284 (TTPAASPTTPPATSVGTTTAAATAAAAKGSAAKGSATSS) has biased composition (low complexity).

The protein belongs to the plant homeotic and developmental regulators ALOG protein family.

The protein resides in the nucleus. In terms of biological role, probable transcription regulator that acts as a developmental regulator by promoting cell growth in response to light. This Oryza sativa subsp. indica (Rice) protein is Protein G1-like9.